Reading from the N-terminus, the 166-residue chain is NADPH-dependent 7-cyano-7-deazaguanine reductase (166 aa).

Cys-57 acts as the Thioimide intermediate in catalysis. The active-site Proton donor is the Asp-64. Substrate-binding positions include 79–81 and 98–99; these read VES and HE.

The protein belongs to the GTP cyclohydrolase I family. QueF type 1 subfamily.

Its subcellular location is the cytoplasm. The catalysed reaction is 7-aminomethyl-7-carbaguanine + 2 NADP(+) = 7-cyano-7-deazaguanine + 2 NADPH + 3 H(+). The protein operates within tRNA modification; tRNA-queuosine biosynthesis. Catalyzes the NADPH-dependent reduction of 7-cyano-7-deazaguanine (preQ0) to 7-aminomethyl-7-deazaguanine (preQ1). The chain is NADPH-dependent 7-cyano-7-deazaguanine reductase from Staphylococcus saprophyticus subsp. saprophyticus (strain ATCC 15305 / DSM 20229 / NCIMB 8711 / NCTC 7292 / S-41).